The following is a 585-amino-acid chain: Protein cereblon (585 aa).

2 disordered regions span residues 1 to 109 (MDEE…DLES) and 156 to 195 (FSQE…IGFD). Positions 80–95 (QDDTASEGSHPSSDMS) are enriched in polar residues. A compositionally biased stretch (basic and acidic residues) spans 158–167 (QERRRSRTSE). Residues 178–189 (VDPPPQQPPRPP) are compositionally biased toward pro residues. The Lon N-terminal domain occupies 225–451 (HMLIFLHQHI…LIKSTFKDET (227 aa)). In terms of domain architecture, CULT spans 450 to 559 (ETLFFCRYCN…LAGSSVRIGK (110 aa)). Zn(2+)-binding residues include C455, C458, C524, and C527.

It belongs to the CRBN family. As to quaternary structure, likely a component of a DCX (DDB1-CUL4-X-box) protein ligase complex. May interact with pic/DDB1. In terms of processing, ubiquitinated. As to expression, expressed in the fat body (at protein level).

The protein localises to the nucleus. Its pathway is protein modification; protein ubiquitination. Substrate recognition component of a DCX (DDB1-CUL4-X-box) E3 protein ligase complex that mediates the ubiquitination and subsequent proteasomal degradation of target proteins. Has an essential role in mediating growth by negatively regulating insulin signaling. It also has a role in maintaining presynaptic function in the neuromuscular junction synapses of third-instar larvae. The protein is Protein cereblon of Drosophila melanogaster (Fruit fly).